We begin with the raw amino-acid sequence, 208 residues long: Large ribosomal subunit protein uL4 (208 aa).

A disordered region spans residues 45 to 89 (RQGTHAHKNRSAVSGGGKKPWRQKGTGRARQGSTRSPQWRGGGTV).

It belongs to the universal ribosomal protein uL4 family. In terms of assembly, part of the 50S ribosomal subunit.

Its function is as follows. One of the primary rRNA binding proteins, this protein initially binds near the 5'-end of the 23S rRNA. It is important during the early stages of 50S assembly. It makes multiple contacts with different domains of the 23S rRNA in the assembled 50S subunit and ribosome. Forms part of the polypeptide exit tunnel. The polypeptide is Large ribosomal subunit protein uL4 (Lactococcus lactis subsp. cremoris (strain SK11)).